Reading from the N-terminus, the 195-residue chain is dCTP deaminase, dUMP-forming (195 aa).

Residues 105-110 (RSSLGR), Asp-123, 131-133 (TLE), Gln-152, Tyr-166, Lys-173, and Gln-177 each bind dCTP. Catalysis depends on Glu-133, which acts as the Proton donor/acceptor. Residues 161-195 (PADRPYGDERGSKYQDQDGPQASRIRGDREFGGTQ) are disordered. Positions 165–176 (PYGDERGSKYQD) are enriched in basic and acidic residues. Residues 185–195 (IRGDREFGGTQ) show a composition bias toward basic and acidic residues.

Belongs to the dCTP deaminase family. Homotrimer.

The catalysed reaction is dCTP + 2 H2O = dUMP + NH4(+) + diphosphate. The protein operates within pyrimidine metabolism; dUMP biosynthesis; dUMP from dCTP: step 1/1. Functionally, bifunctional enzyme that catalyzes both the deamination of dCTP to dUTP and the hydrolysis of dUTP to dUMP without releasing the toxic dUTP intermediate. In Halobacterium salinarum (strain ATCC 700922 / JCM 11081 / NRC-1) (Halobacterium halobium), this protein is dCTP deaminase, dUMP-forming.